The chain runs to 181 residues: MEGGCKVIITTSREPSKKTLELVNDLVNSLPGTSKIVRGKKSFITLLEEAVACGARYIAFIWERRGMPFALLFYDVINREWKPYMLKISGIKTRREFPVFISRRPPAKSAVIVDLSEGEVGDIFTEIFGYPILYSLDAVRGLFDTVVLIRRTDGYLVELLGSDLGPRASSIRIKKVVYRHV.

One can recognise a Brix domain in the interval 5–181 (CKVIITTSRE…RIKKVVYRHV (177 aa)).

Probably involved in the biogenesis of the ribosome. The sequence is that of Probable Brix domain-containing ribosomal biogenesis protein from Pyrobaculum aerophilum (strain ATCC 51768 / DSM 7523 / JCM 9630 / CIP 104966 / NBRC 100827 / IM2).